Reading from the N-terminus, the 231-residue chain is 5'-methylthioadenosine/S-adenosylhomocysteine nucleosidase (231 aa).

The active-site Proton acceptor is the Glu-12. Substrate is bound by residues Gly-78, Met-153, and 174–175 (ME). The active-site Proton donor is the Asp-198.

Belongs to the PNP/UDP phosphorylase family. MtnN subfamily.

The enzyme catalyses S-adenosyl-L-homocysteine + H2O = S-(5-deoxy-D-ribos-5-yl)-L-homocysteine + adenine. The catalysed reaction is S-methyl-5'-thioadenosine + H2O = 5-(methylsulfanyl)-D-ribose + adenine. It catalyses the reaction 5'-deoxyadenosine + H2O = 5-deoxy-D-ribose + adenine. It functions in the pathway amino-acid biosynthesis; L-methionine biosynthesis via salvage pathway; S-methyl-5-thio-alpha-D-ribose 1-phosphate from S-methyl-5'-thioadenosine (hydrolase route): step 1/2. Catalyzes the irreversible cleavage of the glycosidic bond in both 5'-methylthioadenosine (MTA) and S-adenosylhomocysteine (SAH/AdoHcy) to adenine and the corresponding thioribose, 5'-methylthioribose and S-ribosylhomocysteine, respectively. Also cleaves 5'-deoxyadenosine, a toxic by-product of radical S-adenosylmethionine (SAM) enzymes, into 5-deoxyribose and adenine. The chain is 5'-methylthioadenosine/S-adenosylhomocysteine nucleosidase from Bacillus subtilis (strain 168).